The primary structure comprises 391 residues: Elongation factor Tu (391 aa).

The tr-type G domain maps to 10-201 (KPHVNIGTIG…AVDEFIPTPE (192 aa)). The interval 19–26 (GHVDHGKT) is G1. 19–26 (GHVDHGKT) is a GTP binding site. A Mg(2+)-binding site is contributed by Thr-26. Residues 55 to 59 (GITIS) form a G2 region. Residues 76 to 79 (DCPG) form a G3 region. Residues 76 to 80 (DCPGH) and 131 to 134 (NKVD) each bind GTP. A G4 region spans residues 131 to 134 (NKVD). The segment at 169–171 (SAL) is G5.

It belongs to the TRAFAC class translation factor GTPase superfamily. Classic translation factor GTPase family. EF-Tu/EF-1A subfamily. As to quaternary structure, monomer.

It localises to the cytoplasm. The catalysed reaction is GTP + H2O = GDP + phosphate + H(+). In terms of biological role, GTP hydrolase that promotes the GTP-dependent binding of aminoacyl-tRNA to the A-site of ribosomes during protein biosynthesis. This Roseobacter denitrificans (strain ATCC 33942 / OCh 114) (Erythrobacter sp. (strain OCh 114)) protein is Elongation factor Tu.